The sequence spans 311 residues: Small ribosomal subunit biogenesis GTPase RsgA (311 aa).

The CP-type G domain maps to 88 to 246; sequence SKEKEQVIAA…VIDTPGIREF (159 aa). Residues 137-140 and 188-196 each bind GTP; these read NKID and GHSGVGKST. Cys-270, Cys-275, His-277, and Cys-283 together coordinate Zn(2+).

It belongs to the TRAFAC class YlqF/YawG GTPase family. RsgA subfamily. Monomer. Associates with 30S ribosomal subunit, binds 16S rRNA. It depends on Zn(2+) as a cofactor.

The protein localises to the cytoplasm. In terms of biological role, one of several proteins that assist in the late maturation steps of the functional core of the 30S ribosomal subunit. Helps release RbfA from mature subunits. May play a role in the assembly of ribosomal proteins into the subunit. Circularly permuted GTPase that catalyzes slow GTP hydrolysis, GTPase activity is stimulated by the 30S ribosomal subunit. The chain is Small ribosomal subunit biogenesis GTPase RsgA from Chlorobaculum parvum (strain DSM 263 / NCIMB 8327) (Chlorobium vibrioforme subsp. thiosulfatophilum).